Consider the following 1007-residue polypeptide: Kinesin-like protein KIN-7D, chloroplastic (1007 aa).

The transit peptide at Met1–Ser53 directs the protein to the chloroplast. A compositionally biased stretch (low complexity) spans Met1–Ser55. Residues Met1–Ala79 are disordered. Residues Asn83–Ile402 enclose the Kinesin motor domain. Residue Gly163–Thr170 participates in ATP binding. Residues Glu403–Ser495 adopt a coiled-coil conformation. The disordered stretch occupies residues Ile579–Pro607. 3 coiled-coil regions span residues Asn687–Ile716, Ala754–Ala791, and Ser836–Ser907. The disordered stretch occupies residues Glu901–Tyr941. Over residues Thr920 to Tyr941 the composition is skewed to basic and acidic residues. Residues Glu942–Met982 are a coiled coil.

The protein belongs to the TRAFAC class myosin-kinesin ATPase superfamily. Kinesin family. KIN-7 subfamily. In terms of assembly, binds microtubules. Homodimer. Mg(2+) serves as cofactor.

It localises to the plastid. The protein localises to the chloroplast. Probable minus end-directed motor protein with a microtubule-enhanced ATPase activity. Binds ATP/ADP in vitro. Retains total enzymatic activity even after the removal of the ADP bound in the active site. In Oryza sativa subsp. japonica (Rice), this protein is Kinesin-like protein KIN-7D, chloroplastic.